The following is a 77-amino-acid chain: Liver-expressed antimicrobial peptide 2 (77 aa).

An N-terminal signal peptide occupies residues 1 to 22 (MWHLKLCAVLMIFLLLLGQIDG). A propeptide spanning residues 23-37 (SPIPEVSSAKRRPRR) is cleaved from the precursor. Disulfide bonds link C54–C65 and C60–C70.

Belongs to the LEAP2 family.

Its subcellular location is the secreted. Its function is as follows. Has an antimicrobial activity. The sequence is that of Liver-expressed antimicrobial peptide 2 (LEAP2) from Homo sapiens (Human).